A 256-amino-acid polypeptide reads, in one-letter code: Type III pantothenate kinase (256 aa).

An ATP-binding site is contributed by Asp-6–Val-13. Gly-107–Ile-110 contributes to the substrate binding site. Residue Asp-109 is the Proton acceptor of the active site. Asp-129 is a binding site for K(+). Thr-132 is an ATP binding site. Thr-184 serves as a coordination point for substrate.

The protein belongs to the type III pantothenate kinase family. As to quaternary structure, homodimer. NH4(+) serves as cofactor. K(+) is required as a cofactor.

Its subcellular location is the cytoplasm. The enzyme catalyses (R)-pantothenate + ATP = (R)-4'-phosphopantothenate + ADP + H(+). Its pathway is cofactor biosynthesis; coenzyme A biosynthesis; CoA from (R)-pantothenate: step 1/5. In terms of biological role, catalyzes the phosphorylation of pantothenate (Pan), the first step in CoA biosynthesis. In Bifidobacterium longum (strain DJO10A), this protein is Type III pantothenate kinase.